A 65-amino-acid chain; its full sequence is Large ribosomal subunit protein uL29 (65 aa).

It belongs to the universal ribosomal protein uL29 family.

This Mycoplasmopsis synoviae (strain 53) (Mycoplasma synoviae) protein is Large ribosomal subunit protein uL29.